The sequence spans 252 residues: Imidazole glycerol phosphate synthase subunit HisF (252 aa).

Catalysis depends on residues aspartate 11 and aspartate 130.

Belongs to the HisA/HisF family. In terms of assembly, heterodimer of HisH and HisF.

The protein resides in the cytoplasm. The catalysed reaction is 5-[(5-phospho-1-deoxy-D-ribulos-1-ylimino)methylamino]-1-(5-phospho-beta-D-ribosyl)imidazole-4-carboxamide + L-glutamine = D-erythro-1-(imidazol-4-yl)glycerol 3-phosphate + 5-amino-1-(5-phospho-beta-D-ribosyl)imidazole-4-carboxamide + L-glutamate + H(+). It functions in the pathway amino-acid biosynthesis; L-histidine biosynthesis; L-histidine from 5-phospho-alpha-D-ribose 1-diphosphate: step 5/9. In terms of biological role, IGPS catalyzes the conversion of PRFAR and glutamine to IGP, AICAR and glutamate. The HisF subunit catalyzes the cyclization activity that produces IGP and AICAR from PRFAR using the ammonia provided by the HisH subunit. This Bacillus mycoides (strain KBAB4) (Bacillus weihenstephanensis) protein is Imidazole glycerol phosphate synthase subunit HisF.